A 116-amino-acid polypeptide reads, in one-letter code: Phosphoribosyl-AMP cyclohydrolase (116 aa).

Position 81 (D81) interacts with Mg(2+). Residue C82 coordinates Zn(2+). Mg(2+) contacts are provided by D83 and D85. Zn(2+) contacts are provided by C98 and C105.

Belongs to the PRA-CH family. In terms of assembly, homodimer. Requires Mg(2+) as cofactor. It depends on Zn(2+) as a cofactor.

Its subcellular location is the cytoplasm. It carries out the reaction 1-(5-phospho-beta-D-ribosyl)-5'-AMP + H2O = 1-(5-phospho-beta-D-ribosyl)-5-[(5-phospho-beta-D-ribosylamino)methylideneamino]imidazole-4-carboxamide. Its pathway is amino-acid biosynthesis; L-histidine biosynthesis; L-histidine from 5-phospho-alpha-D-ribose 1-diphosphate: step 3/9. Its function is as follows. Catalyzes the hydrolysis of the adenine ring of phosphoribosyl-AMP. The polypeptide is Phosphoribosyl-AMP cyclohydrolase (Mycolicibacterium vanbaalenii (strain DSM 7251 / JCM 13017 / BCRC 16820 / KCTC 9966 / NRRL B-24157 / PYR-1) (Mycobacterium vanbaalenii)).